The sequence spans 553 residues: Glutamate--tRNA ligase (553 aa).

A 'HIGH' region motif is present at residues 41–51 (PSPTGFQHIGG). The 'KMSKS' region signature appears at 293–297 (KLSKR). Lysine 296 contributes to the ATP binding site.

Belongs to the class-I aminoacyl-tRNA synthetase family. Glutamate--tRNA ligase type 1 subfamily. As to quaternary structure, monomer.

The protein resides in the cytoplasm. It catalyses the reaction tRNA(Glu) + L-glutamate + ATP = L-glutamyl-tRNA(Glu) + AMP + diphosphate. Functionally, catalyzes the attachment of glutamate to tRNA(Glu) in a two-step reaction: glutamate is first activated by ATP to form Glu-AMP and then transferred to the acceptor end of tRNA(Glu). The chain is Glutamate--tRNA ligase from Clostridium beijerinckii (strain ATCC 51743 / NCIMB 8052) (Clostridium acetobutylicum).